The following is a 76-amino-acid chain: Protein OPG128 (76 aa).

C17 and C21 are oxidised to a cystine.

This sequence belongs to the orthopoxvirus OPG128 family. As to quaternary structure, interacts with sulfhydryl oxidase OPG072; this interaction involves formation of a transient disulfide-bonded intermediate, allowing disulfide bond transfer. Interacts with OPG088; this interaction involves formation of a transient disulfide-bonded intermediate, allowing disulfide bond transfer.

In terms of biological role, late protein which probably participates in disulfide bond formation by functioning as a thiol-disulfide transfer protein between membrane-associated OPG072 and OPG08. The complete pathway for formation of disulfide bonds in intracellular virion membrane proteins sequentially involves oxidation of OPG072, OPG128 and OPG08. The polypeptide is Protein OPG128 (OPG128) (Variola virus (isolate Human/India/Ind3/1967) (VARV)).